The sequence spans 344 residues: Dihydroorotase (344 aa).

Zn(2+) is bound by residues His13 and His15. Substrate contacts are provided by residues 15–17 and Asn41; that span reads HVR. 3 residues coordinate Zn(2+): Lys99, His136, and His174. N6-carboxylysine is present on Lys99. Position 136 (His136) interacts with substrate. Substrate is bound at residue Leu219. Asp247 contributes to the Zn(2+) binding site. Residue Asp247 is part of the active site. Substrate-binding residues include His251 and Ala263.

It belongs to the metallo-dependent hydrolases superfamily. DHOase family. Class II DHOase subfamily. Homodimer. Requires Zn(2+) as cofactor.

It catalyses the reaction (S)-dihydroorotate + H2O = N-carbamoyl-L-aspartate + H(+). The protein operates within pyrimidine metabolism; UMP biosynthesis via de novo pathway; (S)-dihydroorotate from bicarbonate: step 3/3. Catalyzes the reversible cyclization of carbamoyl aspartate to dihydroorotate. The sequence is that of Dihydroorotase from Aromatoleum aromaticum (strain DSM 19018 / LMG 30748 / EbN1) (Azoarcus sp. (strain EbN1)).